The sequence spans 250 residues: Malonyl-[acyl-carrier protein] O-methyltransferase (250 aa).

The protein belongs to the methyltransferase superfamily.

The enzyme catalyses malonyl-[ACP] + S-adenosyl-L-methionine = malonyl-[ACP] methyl ester + S-adenosyl-L-homocysteine. It participates in cofactor biosynthesis; biotin biosynthesis. Functionally, converts the free carboxyl group of a malonyl-thioester to its methyl ester by transfer of a methyl group from S-adenosyl-L-methionine (SAM). It allows to synthesize pimeloyl-ACP via the fatty acid synthetic pathway. The sequence is that of Malonyl-[acyl-carrier protein] O-methyltransferase from Neorickettsia risticii (strain Illinois).